Here is a 200-residue protein sequence, read N- to C-terminus: 3-isopropylmalate dehydratase small subunit (200 aa).

It belongs to the LeuD family. LeuD type 1 subfamily. In terms of assembly, heterodimer of LeuC and LeuD.

The enzyme catalyses (2R,3S)-3-isopropylmalate = (2S)-2-isopropylmalate. It participates in amino-acid biosynthesis; L-leucine biosynthesis; L-leucine from 3-methyl-2-oxobutanoate: step 2/4. Its function is as follows. Catalyzes the isomerization between 2-isopropylmalate and 3-isopropylmalate, via the formation of 2-isopropylmaleate. The sequence is that of 3-isopropylmalate dehydratase small subunit from Histophilus somni (strain 129Pt) (Haemophilus somnus).